The primary structure comprises 360 residues: DNA replication and repair protein RecF (360 aa).

30 to 37 provides a ligand contact to ATP; the sequence is GNNGSGKT.

It belongs to the RecF family.

Its subcellular location is the cytoplasm. Functionally, the RecF protein is involved in DNA metabolism; it is required for DNA replication and normal SOS inducibility. RecF binds preferentially to single-stranded, linear DNA. It also seems to bind ATP. This chain is DNA replication and repair protein RecF, found in Mannheimia succiniciproducens (strain KCTC 0769BP / MBEL55E).